A 247-amino-acid polypeptide reads, in one-letter code: tRNA uridine(34) hydroxylase (247 aa).

One can recognise a Rhodanese domain in the interval 124 to 218 (TKQNVILIDT…YLEDTHNKNN (95 aa)). Catalysis depends on Cys178, which acts as the Cysteine persulfide intermediate.

It belongs to the TrhO family.

The catalysed reaction is uridine(34) in tRNA + AH2 + O2 = 5-hydroxyuridine(34) in tRNA + A + H2O. Its function is as follows. Catalyzes oxygen-dependent 5-hydroxyuridine (ho5U) modification at position 34 in tRNAs. The polypeptide is tRNA uridine(34) hydroxylase (Rickettsia prowazekii (strain Madrid E)).